A 547-amino-acid polypeptide reads, in one-letter code: CTP synthase (547 aa).

The amidoligase domain stretch occupies residues 1-265 (MARYVFITGG…DQAVLDAFGI (265 aa)). Position 13 (serine 13) interacts with CTP. Serine 13 lines the UTP pocket. Residues 14–19 (SLGKGL) and aspartate 71 contribute to the ATP site. Mg(2+) contacts are provided by aspartate 71 and glutamate 139. CTP contacts are provided by residues 146-148 (DIE), 186-191 (KTKPTQ), and lysine 222. UTP-binding positions include 186 to 191 (KTKPTQ) and lysine 222. In terms of domain architecture, Glutamine amidotransferase type-1 spans 291 to 546 (RVAIVGKYTQ…VRAAVEVSRL (256 aa)). Residue glycine 353 participates in L-glutamine binding. Cysteine 380 functions as the Nucleophile; for glutamine hydrolysis in the catalytic mechanism. L-glutamine contacts are provided by residues 381-384 (LGMQ), glutamate 404, and arginine 474. Active-site residues include histidine 519 and glutamate 521.

This sequence belongs to the CTP synthase family. In terms of assembly, homotetramer.

It catalyses the reaction UTP + L-glutamine + ATP + H2O = CTP + L-glutamate + ADP + phosphate + 2 H(+). The catalysed reaction is L-glutamine + H2O = L-glutamate + NH4(+). The enzyme catalyses UTP + NH4(+) + ATP = CTP + ADP + phosphate + 2 H(+). Its pathway is pyrimidine metabolism; CTP biosynthesis via de novo pathway; CTP from UDP: step 2/2. Its activity is regulated as follows. Allosterically activated by GTP, when glutamine is the substrate; GTP has no effect on the reaction when ammonia is the substrate. The allosteric effector GTP functions by stabilizing the protein conformation that binds the tetrahedral intermediate(s) formed during glutamine hydrolysis. Inhibited by the product CTP, via allosteric rather than competitive inhibition. Functionally, catalyzes the ATP-dependent amination of UTP to CTP with either L-glutamine or ammonia as the source of nitrogen. Regulates intracellular CTP levels through interactions with the four ribonucleotide triphosphates. The sequence is that of CTP synthase from Cereibacter sphaeroides (strain ATCC 17023 / DSM 158 / JCM 6121 / CCUG 31486 / LMG 2827 / NBRC 12203 / NCIMB 8253 / ATH 2.4.1.) (Rhodobacter sphaeroides).